The primary structure comprises 161 residues: Zinc finger A20 and AN1 domain-containing stress-associated protein 9 (161 aa).

Residues 17–51 (PEAPILCVNNCGFFGSSMTNNMCSKCYRDFVKVTT) form an A20-type zinc finger. Zn(2+)-binding residues include Cys23, Cys27, Cys39, and Cys42. The interval 62–99 (FTPASSSKTPLEPAKPDEVPAAAVEDKQAAQEPPKPPS) is disordered. The segment covering 75-90 (AKPDEVPAAAVEDKQA) has biased composition (basic and acidic residues). The segment at 96–142 (KPPSNRCLSCRKKVGLTGFQCRCGGTFCSTHRYTEAHDCTFDYKKAG) adopts an AN1-type zinc-finger fold. Zn(2+)-binding residues include Cys102, Cys105, Cys116, Cys118, Cys123, His126, His132, and Cys134.

Its function is as follows. May be involved in environmental stress response. This Oryza sativa subsp. japonica (Rice) protein is Zinc finger A20 and AN1 domain-containing stress-associated protein 9 (SAP9).